The primary structure comprises 178 residues: MSRIGKEPITIPSGVETKIDGQLVEVKGPKGTLNVNVPEPISVAVEDGKIVVTRPDDHRTNRSLHGLSRSLVNNLVVGVTEGYTIKMEIFGVGYRVALKGKDLEFSLGYSHPVLIEASEGITFAVDGNTKLSVSGIDKQKVGQVAAVIRRLRKDDPYKGKGIRYEGEQIRRKVGKTGK.

The protein belongs to the universal ribosomal protein uL6 family. Part of the 50S ribosomal subunit.

Its function is as follows. This protein binds to the 23S rRNA, and is important in its secondary structure. It is located near the subunit interface in the base of the L7/L12 stalk, and near the tRNA binding site of the peptidyltransferase center. This Corynebacterium glutamicum (strain R) protein is Large ribosomal subunit protein uL6.